The primary structure comprises 437 residues: ATP-dependent RNA helicase RhlB (437 aa).

The Q motif signature appears at 9–37 (KKFADFPLHKEVQQALNEVGFEFCTPIQA). The Helicase ATP-binding domain occupies 40 to 219 (LPILLAKKDI…YDHMNEPEKV (180 aa)). An ATP-binding site is contributed by 53–60 (AQTGTGKT). A DEAD box motif is present at residues 165-168 (DEAD). Positions 243–390 (KMPLLLSLLE…VTSYDSEALL (148 aa)) constitute a Helicase C-terminal domain. Residues 394 to 437 (PAPKRIHRKPSSHSRNSRDRSGSRPQGGHRGNAPRRHDKTRRHS) are disordered. Positions 425–437 (NAPRRHDKTRRHS) are enriched in basic residues.

Belongs to the DEAD box helicase family. RhlB subfamily. As to quaternary structure, component of the RNA degradosome, which is a multiprotein complex involved in RNA processing and mRNA degradation.

It localises to the cytoplasm. The enzyme catalyses ATP + H2O = ADP + phosphate + H(+). Its function is as follows. DEAD-box RNA helicase involved in RNA degradation. Has RNA-dependent ATPase activity and unwinds double-stranded RNA. The chain is ATP-dependent RNA helicase RhlB from Shewanella piezotolerans (strain WP3 / JCM 13877).